The following is a 205-amino-acid chain: Glycerol-3-phosphate acyltransferase (205 aa).

Over 1 to 3 (MSA) the chain is Periplasmic. The helical transmembrane segment at 4–24 (IAPGMILFAYLCGSISSAILV) threads the bilayer. Residues 25 to 52 (CRIAGLPDPRESGSGNPGATNVLRIGGK) are Cytoplasmic-facing. A helical membrane pass occupies residues 53 to 73 (GAAVAVLIFDILKGMLPVWGA). At 74 to 80 (YALGVTP) the chain is on the periplasmic side. Residues 81-101 (FWLGLIAIAACLGHIWPVFFG) form a helical membrane-spanning segment. Topologically, residues 102-111 (FKGGKGVATA) are cytoplasmic. Residues 112–132 (FGAIAPIGWDLTGVMAGTWLL) traverse the membrane as a helical segment. The Periplasmic segment spans residues 133–137 (TVLLS). A helical membrane pass occupies residues 138–158 (GYSSLGAIVSALIAPFYVWWF). Residues 159-205 (KPQFTFPVSMLSCLILLRHHDNIQRLWRRQETKIWTKLKKKRQKDSE) are Cytoplasmic-facing.

It belongs to the PlsY family. In terms of assembly, probably interacts with PlsX.

The protein localises to the cell inner membrane. It catalyses the reaction sn-glycerol 3-phosphate + an acyl-CoA = a 1-acyl-sn-glycero-3-phosphate + CoA. It carries out the reaction a fatty acyl-[ACP] + sn-glycerol 3-phosphate = a 1-acyl-sn-glycero-3-phosphate + holo-[ACP]. It functions in the pathway lipid metabolism; phospholipid metabolism. Catalyzes the transfer of an acyl group from acyl-ACP to glycerol-3-phosphate (G3P) to form lysophosphatidic acid (LPA). This enzyme can also utilize acyl-CoA as fatty acyl donor, but not acyl-PO(4). This is Glycerol-3-phosphate acyltransferase from Salmonella schwarzengrund (strain CVM19633).